Consider the following 88-residue polypeptide: Small ribosomal subunit protein bS20 (88 aa).

The segment at 1–25 is disordered; that stretch reads MANSAQARKRARQATKARAHNASLR. The span at 7-19 shows a compositional bias: basic residues; the sequence is ARKRARQATKARA.

The protein belongs to the bacterial ribosomal protein bS20 family.

In terms of biological role, binds directly to 16S ribosomal RNA. This Azoarcus sp. (strain BH72) protein is Small ribosomal subunit protein bS20.